Here is an 89-residue protein sequence, read N- to C-terminus: Small ribosomal subunit protein bS20 (89 aa).

The disordered stretch occupies residues 1–26; that stretch reads MANSPQAKKRARQNEKNRKHNASLRS. Residues 7-22 are compositionally biased toward basic residues; the sequence is AKKRARQNEKNRKHNA.

The protein belongs to the bacterial ribosomal protein bS20 family.

In terms of biological role, binds directly to 16S ribosomal RNA. The polypeptide is Small ribosomal subunit protein bS20 (Marinobacter nauticus (strain ATCC 700491 / DSM 11845 / VT8) (Marinobacter aquaeolei)).